A 102-amino-acid polypeptide reads, in one-letter code: Integration host factor subunit beta (102 aa).

It belongs to the bacterial histone-like protein family. As to quaternary structure, heterodimer of an alpha and a beta chain.

Functionally, this protein is one of the two subunits of integration host factor, a specific DNA-binding protein that functions in genetic recombination as well as in transcriptional and translational control. The protein is Integration host factor subunit beta of Rhizobium rhizogenes (strain K84 / ATCC BAA-868) (Agrobacterium radiobacter).